Here is a 175-residue protein sequence, read N- to C-terminus: MSKQDEVIVVGKFGASYGIRGWLKVVSFTDQPESIFDYKPWLIQVKGEWVEFSVESWKRHKGLVCKLKGLDVREEAQTYTNLEIAVKADVLPELSEDEFYWRELFGMEVVTTKGYALGVVDDIFETGSNDVLVVKANLKDAFGKKERLIPFIDEQVIKLIDREAQRIEVDWDPGF.

Residues 95–175 form the PRC barrel domain; the sequence is SEDEFYWREL…RIEVDWDPGF (81 aa).

This sequence belongs to the RimM family. As to quaternary structure, binds ribosomal protein uS19.

It is found in the cytoplasm. Functionally, an accessory protein needed during the final step in the assembly of 30S ribosomal subunit, possibly for assembly of the head region. Essential for efficient processing of 16S rRNA. May be needed both before and after RbfA during the maturation of 16S rRNA. It has affinity for free ribosomal 30S subunits but not for 70S ribosomes. The protein is Ribosome maturation factor RimM of Aliivibrio fischeri (strain MJ11) (Vibrio fischeri).